Reading from the N-terminus, the 346-residue chain is D-alanine--D-alanine ligase (346 aa).

One can recognise an ATP-grasp domain in the interval 133 to 327 (KLYAKSVGVK…ALADQISLEK (195 aa)). 159–211 (LSFPCIIKPARLGSSIGISIVKDEKDLEYAKDVGFEFDNDLVVEEFKNNIKEY) provides a ligand contact to ATP. The Mg(2+) site is built by D284, E296, and N298.

The protein belongs to the D-alanine--D-alanine ligase family. The cofactor is Mg(2+). Mn(2+) is required as a cofactor.

The protein localises to the cytoplasm. The enzyme catalyses 2 D-alanine + ATP = D-alanyl-D-alanine + ADP + phosphate + H(+). The protein operates within cell wall biogenesis; peptidoglycan biosynthesis. Functionally, cell wall formation. The sequence is that of D-alanine--D-alanine ligase from Campylobacter jejuni subsp. jejuni serotype O:23/36 (strain 81-176).